The following is a 381-amino-acid chain: Guanine nucleotide-binding protein G(olf) subunit alpha (381 aa).

The segment at 1–25 (MGCLGNSSKTAEDQGVDEKERREAN) is disordered. G2 is lipidated: N-palmitoyl glycine. C3 carries the S-palmitoyl cysteine lipid modification. Residues 10–25 (TAEDQGVDEKERREAN) show a composition bias toward basic and acidic residues. The G-alpha domain maps to 41–381 (ATHRLLLLGA…RMHLKQYELL (341 aa)). A G1 motif region spans residues 44 to 57 (RLLLLGAGESGKST). 6 residues coordinate GTP: E52, S53, G54, K55, S56, and T57. Mg(2+) is bound at residue S56. T178 carries the phosphothreonine modification. Positions 183–191 (DLLRCRVLT) are G2 motif. Positions 185, 186, and 191 each coordinate GTP. The Mg(2+) site is built by T191 and D210. Residues 206–215 (FHMFDVGGQR) form a G3 motif region. GTP contacts are provided by G213, N279, K280, D282, and A353. Residues 275-282 (ILFLNKQD) form a G4 motif region. The segment at 351–356 (TCAVDT) is G5 motif.

This sequence belongs to the G-alpha family. G(s) subfamily. As to quaternary structure, g proteins are composed of 3 units; alpha, beta and gamma. The alpha chain contains the guanine nucleotide binding site. Interacts with GAS2L2. Interacts (GDP-bound form) with RIC8B (via C-terminus); promoting GNAL folding and association with the plasma membrane.

It is found in the cell membrane. It carries out the reaction GTP + H2O = GDP + phosphate + H(+). Guanine nucleotide-binding protein (G protein) involved as transducer in olfactory signal transduction controlled by G protein-coupled receptors (GPCRs). Contains the guanine nucleotide binding site and alternates between an active, GTP-bound state and an inactive, GDP-bound state. Signaling by an activated GPCR promotes GDP release and GTP binding. The alpha subunit has a low GTPase activity that converts bound GTP to GDP, thereby terminating the signal. Both GDP release and GTP hydrolysis are modulated by numerous regulatory proteins. GNAL/G(olf) alpha specifically mediates olfactory signal transduction within the olfactory neuroepithelium and the basal ganglia following GPCRs activation. Acts by promoting the specific activation of adenylyl cyclase ADCY3, resulting in increased levels of the signaling molecule cAMP. The polypeptide is Guanine nucleotide-binding protein G(olf) subunit alpha (Mus musculus (Mouse)).